Consider the following 82-residue polypeptide: RNA-binding protein Hfq (82 aa).

A Sm domain is found at 9 to 68 (DPYLNTLRKERVPVSIYLVNGIKLQGQIESFDQFVILLKNTVSQMVYKTAISTVVPSRPV).

It belongs to the Hfq family. In terms of assembly, homohexamer.

Functionally, RNA chaperone that binds small regulatory RNA (sRNAs) and mRNAs to facilitate mRNA translational regulation in response to envelope stress, environmental stress and changes in metabolite concentrations. Also binds with high specificity to tRNAs. This chain is RNA-binding protein Hfq, found in Pseudomonas aeruginosa.